Here is a 328-residue protein sequence, read N- to C-terminus: Type II secretion system protein K (328 aa).

Residues 1–7 (MRSRQRG) constitute a propeptide, leader sequence. Residues 8 to 28 (AALLVVLLILALMVTIAAVIT) traverse the membrane as a helical segment. The Periplasmic portion of the chain corresponds to 29–328 (ERTGKAFLRT…QYGGYRTVNP (300 aa)).

Belongs to the GSP K family. Type II secretion is composed of four main components: the outer membrane complex, the inner membrane complex, the cytoplasmic secretion ATPase and the periplasm-spanning pseudopilus. Interacts with core component OutG. Cleaved by prepilin peptidase.

It is found in the cell inner membrane. Functionally, component of the type II secretion system required for the energy-dependent secretion of extracellular factors such as proteases and toxins from the periplasm. Plays a role in pseudopilus assembly and seems to control its length. Interacts with the pseudopilus tip complex that is critical for the recognition and binding of secretion substrates. The chain is Type II secretion system protein K (outK) from Pectobacterium carotovorum subsp. carotovorum (Erwinia carotovora subsp. carotovora).